We begin with the raw amino-acid sequence, 193 residues long: Dirigent protein (193 aa).

An N-terminal signal peptide occupies residues 1 to 29 (MGGEKAFSFIFLLFLCFFLANLSASSAHP). A disulfide bridge connects residues Cys40 and Cys192. 2 N-linked (GlcNAc...) asparagine glycosylation sites follow: Asn59 and Asn129.

It belongs to the plant dirigent protein family. Homodimer. As to expression, expressed in rhizomes, stems, and leaves.

The protein localises to the secreted. Its subcellular location is the extracellular space. It localises to the apoplast. It functions in the pathway aromatic compound metabolism; phenylpropanoid biosynthesis. Dirigent proteins impart stereoselectivity on the phenoxy radical-coupling reaction, yielding optically active lignans from two molecules of coniferyl alcohol in the biosynthesis of lignans, flavonolignans, and alkaloids and thus plays a central role in plant secondary metabolism. Also involved in the biosynthesis of etoposide, a chemotherapeutic compound of the topoisomerase inhibitor family. This chain is Dirigent protein, found in Sinopodophyllum hexandrum (Himalayan may apple).